Here is a 658-residue protein sequence, read N- to C-terminus: Katanin p80 WD40 repeat-containing subunit B1 (658 aa).

The tract at residues Met-1–Gln-284 is interaction with dynein. Residues Met-1–Val-300 are interaction with centrosomes. WD repeat units follow at residues Ala-18–Ser-58, Gly-61–Thr-100, Gly-103–Arg-142, Gly-145–Glu-184, Gly-187–Cys-226, and Gly-229–Leu-269. The segment at Leu-285–Glu-437 is interaction with PAFAH1B1. The segment covering Val-311–Pro-329 has biased composition (polar residues). 2 disordered regions span residues Val-311–Lys-419 and Pro-434–Ile-458. The segment covering His-352–Ala-374 has biased composition (basic and acidic residues). Thr-395 is subject to Phosphothreonine. The tract at residues Leu-436–Asp-658 is interaction with KATNA1 and NDEL1.

The protein belongs to the WD repeat KATNB1 family. As to quaternary structure, interacts with KATNA1. This interaction enhances the microtubule binding and severing activity of KATNA1 and also targets this activity to the centrosome. This interaction is weakly competed by KATNBL1 which has a lower affinity for it. Interacts with ASPM; the katanin complex formation KATNA1:KATNB1 is required for the association of ASPM. Interacts with dynein, microtubules, NDEL1 and PAFAH1B1. Interacts with KATNAL1; this interaction is weakly competed by KATNBL1 which has a lower affinity for it. Interacts with CAMSAP2 and CAMSAP3; leading to regulate the length of CAMSAP-decorated microtubule stretches.

The protein localises to the cytoplasm. The protein resides in the cytoskeleton. It localises to the microtubule organizing center. Its subcellular location is the centrosome. It is found in the spindle pole. The protein localises to the spindle. Its function is as follows. Participates in a complex which severs microtubules in an ATP-dependent manner. May act to target the enzymatic subunit of this complex to sites of action such as the centrosome. Microtubule severing may promote rapid reorganization of cellular microtubule arrays and the release of microtubules from the centrosome following nucleation. Microtubule release from the mitotic spindle poles may allow depolymerization of the microtubule end proximal to the spindle pole, leading to poleward microtubule flux and poleward motion of chromosome. The function in regulating microtubule dynamics at spindle poles seems to depend on the association of the katanin KATNA1:KATNB1 complex with ASPM which recruits it to microtubules. Reversely KATNA1:KATNB1 can enhance ASPM blocking activity on microtubule minus-end growth. Microtubule release within the cell body of neurons may be required for their transport into neuronal processes by microtubule-dependent motor proteins. This transport is required for axonal growth. The polypeptide is Katanin p80 WD40 repeat-containing subunit B1 (Katnb1) (Mus musculus (Mouse)).